The primary structure comprises 511 residues: NAD(P)H-quinone oxidoreductase subunit 2 B, chloroplastic (511 aa).

13 consecutive transmembrane segments (helical) span residues Leu24–Leu44, Ile57–Phe77, Ile99–Ile119, Met124–Cys144, Leu149–Tyr169, Tyr183–Gly203, Pro227–Ala247, Trp295–Ile315, Met323–Asp343, Tyr354–Leu374, Ala395–Phe415, Leu418–Leu438, and Met484–Ile504.

Belongs to the complex I subunit 2 family. NDH is composed of at least 16 different subunits, 5 of which are encoded in the nucleus.

It localises to the plastid. The protein localises to the chloroplast thylakoid membrane. It carries out the reaction a plastoquinone + NADH + (n+1) H(+)(in) = a plastoquinol + NAD(+) + n H(+)(out). The enzyme catalyses a plastoquinone + NADPH + (n+1) H(+)(in) = a plastoquinol + NADP(+) + n H(+)(out). In terms of biological role, NDH shuttles electrons from NAD(P)H:plastoquinone, via FMN and iron-sulfur (Fe-S) centers, to quinones in the photosynthetic chain and possibly in a chloroplast respiratory chain. The immediate electron acceptor for the enzyme in this species is believed to be plastoquinone. Couples the redox reaction to proton translocation, and thus conserves the redox energy in a proton gradient. This chain is NAD(P)H-quinone oxidoreductase subunit 2 B, chloroplastic, found in Nandina domestica (Heavenly bamboo).